The primary structure comprises 1267 residues: Clustered mitochondria protein homolog (1267 aa).

TPR repeat units lie at residues 64-102 (YNLKNSTGDLLLSSEEKTLRELCSDKDEYKVALELKPYN), 420-453 (YSFVGDLNQTYADKGGDEAAIASANQDLRTLNML), 716-749 (EAHEAKLAQVIVDNKEYEEWEKSYLQKIETMIKE), 795-830 (LVPLIKTAELEIISRSLKHILRKYSRSLPPIVIPAL), 904-939 (RSICNKFGVQLLNKDYFFSTEQLEEYKQSLDKKSRA), 1010-1043 (AEKYLTLSTIYNKLGLNAEAIAFCRKSCAIYERV), and 1138-1171 (AYIKSKLGNLLAADNRFSDALNQIKVAERIFTKE). The region spanning 329-586 (PTNGPDYLRT…NTYPLDVEFA (258 aa)) is the Clu domain. Residues 1203–1219 (QQDQTAASGLKQQPQKS) are compositionally biased toward polar residues. Positions 1203–1267 (QQDQTAASGL…KSKSKGKNKK (65 aa)) are disordered. Residues 1224 to 1239 (NKKETTNPDLADKSVD) show a composition bias toward basic and acidic residues. Positions 1254-1267 (KTTKKSKSKGKNKK) are enriched in basic residues.

The protein belongs to the CLU family. As to quaternary structure, may associate with the eukaryotic translation initiation factor 3 (eIF-3) complex.

It localises to the cytoplasm. In terms of biological role, mRNA-binding protein involved in proper cytoplasmic distribution of mitochondria. The chain is Clustered mitochondria protein homolog from Candida glabrata (strain ATCC 2001 / BCRC 20586 / JCM 3761 / NBRC 0622 / NRRL Y-65 / CBS 138) (Yeast).